The primary structure comprises 227 residues: Orotate phosphoribosyltransferase 2 (227 aa).

Residue 41-42 (FF) participates in orotate binding. 5-phospho-alpha-D-ribose 1-diphosphate contacts are provided by residues 79 to 80 (YK), R109, K110, K113, H115, and 135 to 143 (DDVMTAGTA). The orotate site is built by T139 and R167.

The protein belongs to the purine/pyrimidine phosphoribosyltransferase family. PyrE subfamily. In terms of assembly, homodimer.

It catalyses the reaction orotidine 5'-phosphate + diphosphate = orotate + 5-phospho-alpha-D-ribose 1-diphosphate. The protein operates within pyrimidine metabolism; UMP biosynthesis via de novo pathway; UMP from orotate: step 1/2. Catalyzes the transfer of a ribosyl phosphate group from 5-phosphoribose 1-diphosphate to orotate, leading to the formation of orotidine monophosphate (OMP). This chain is Orotate phosphoribosyltransferase 2 (URA10), found in Saccharomyces cerevisiae (strain ATCC 204508 / S288c) (Baker's yeast).